We begin with the raw amino-acid sequence, 78 residues long: Translation initiation factor IF-1, chloroplastic (78 aa).

Residues 1 to 72 (MKKQNLIDME…TKGRITYRLR (72 aa)) enclose the S1-like domain.

Belongs to the IF-1 family. As to quaternary structure, component of the 30S ribosomal translation pre-initiation complex which assembles on the 30S ribosome in the order IF-2 and IF-3, IF-1 and N-formylmethionyl-tRNA(fMet); mRNA recruitment can occur at any time during PIC assembly.

The protein localises to the plastid. It is found in the chloroplast. One of the essential components for the initiation of protein synthesis. Stabilizes the binding of IF-2 and IF-3 on the 30S subunit to which N-formylmethionyl-tRNA(fMet) subsequently binds. Helps modulate mRNA selection, yielding the 30S pre-initiation complex (PIC). Upon addition of the 50S ribosomal subunit IF-1, IF-2 and IF-3 are released leaving the mature 70S translation initiation complex. The polypeptide is Translation initiation factor IF-1, chloroplastic (Physcomitrium patens (Spreading-leaved earth moss)).